Consider the following 343-residue polypeptide: Cyclin-Y-like protein 1 (343 aa).

Positions methionine 1 to isoleucine 48 are disordered. Positions alanine 17–glutamate 28 are enriched in basic and acidic residues. Residues glutamate 145 to asparagine 267 enclose the Cyclin N-terminal domain.

It belongs to the cyclin family. Cyclin Y subfamily.

The protein resides in the cell membrane. Key regulator of Wnt signaling implicated in various biological processes, such as embryonic neurogenesis. The sequence is that of Cyclin-Y-like protein 1 (ccnyl1) from Xenopus tropicalis (Western clawed frog).